The following is a 305-amino-acid chain: Transcription factor MYB87 (305 aa).

2 consecutive HTH myb-type domains span residues Lys-9 to Leu-66 and Lys-67 to Leu-117. 2 consecutive DNA-binding regions (H-T-H motif) follow at residues Trp-38–Leu-62 and Trp-90–Leu-113.

In terms of tissue distribution, expressed in roots, leaves, internodes, shoot tips and flowers.

The protein localises to the nucleus. In terms of biological role, transcription factor that functions as a regulator of genes affecting cell wall organization and remodeling. Activates genes related to the primary cell wall and represses genes related to the secondary cell wall and expansins. Required for the regulation of longitudinal cell growth in stems, leaves, petioles, roots, flowers and siliques. The sequence is that of Transcription factor MYB87 from Arabidopsis thaliana (Mouse-ear cress).